Here is a 415-residue protein sequence, read N- to C-terminus: Na(+)-translocating NADH-quinone reductase subunit B (415 aa).

The next 4 membrane-spanning stretches (helical) occupy residues 23-40 (WFAL…PGLV), 56-76 (IMIM…YNAG), 129-149 (FLPI…LFCM), and 164-184 (ILFA…LGIT). Position 236 is an FMN phosphoryl threonine (T236). A run of 5 helical transmembrane segments spans residues 275–295 (VSTL…IASW), 297–317 (IIGG…VIGS), 325–345 (MPWH…FMAT), 358–378 (WAYG…NPAY), and 381–401 (GMML…HVVV).

This sequence belongs to the NqrB/RnfD family. As to quaternary structure, composed of six subunits; NqrA, NqrB, NqrC, NqrD, NqrE and NqrF. Requires riboflavin as cofactor. FMN is required as a cofactor.

It is found in the cell inner membrane. The enzyme catalyses a ubiquinone + n Na(+)(in) + NADH + H(+) = a ubiquinol + n Na(+)(out) + NAD(+). Its function is as follows. NQR complex catalyzes the reduction of ubiquinone-1 to ubiquinol by two successive reactions, coupled with the transport of Na(+) ions from the cytoplasm to the periplasm. NqrA to NqrE are probably involved in the second step, the conversion of ubisemiquinone to ubiquinol. This is Na(+)-translocating NADH-quinone reductase subunit B from Vibrio cholerae serotype O1 (strain ATCC 39541 / Classical Ogawa 395 / O395).